The sequence spans 151 residues: UPF0208 membrane protein YE1335 (151 aa).

Helical transmembrane passes span 46–66 (FGIR…IALG) and 69–89 (LGPA…GLWW).

It belongs to the UPF0208 family.

It localises to the cell inner membrane. This Yersinia enterocolitica serotype O:8 / biotype 1B (strain NCTC 13174 / 8081) protein is UPF0208 membrane protein YE1335.